A 708-amino-acid polypeptide reads, in one-letter code: Leucine-rich repeat neuronal protein 3 (708 aa).

The first 22 residues, 1–22 (MKDMPLQIHVLLGLAITTLVQA), serve as a signal peptide directing secretion. The 47-residue stretch at 23–69 (VDKKVDCPQLCTCEIRPWFTPTSIYMEASTVDCNDLGLLTFPARLPA) folds into the LRRNT domain. Over 23–628 (VDKKVDCPQL…KEYEKSNTTT (606 aa)) the chain is Extracellular. 12 LRR repeats span residues 70–91 (NTQI…TDFP), 93–114 (NLTG…NVKK), 117–138 (QLLS…CLSE), 141–162 (NLQE…AFIG), 165–186 (NLLR…WFDA), 189–210 (NLEI…NFKP), 213–234 (NLRS…ALVG), 237–258 (NLES…ALQK), 261–282 (NLKF…DFSN), 285–304 (HLKE…DSLA), 310–332 (DLRK…AFFR), and 335–358 (KLES…ESLP). Residues N93 and N103 are each glycosylated (N-linked (GlcNAc...) asparagine). Residue N223 is glycosylated (N-linked (GlcNAc...) asparagine). The region spanning 368-421 (NPIRCDCVIRWINMNKTNIRFMEPDSLFCVDPPEFQGQNVRQVHFRDMMEICLP) is the LRRCT domain. A glycan (N-linked (GlcNAc...) asparagine) is linked at N382. An Ig-like C2-type domain is found at 421–514 (PLIAPESFPS…DLKSVMIKVD (94 aa)). Residues C444 and C496 are joined by a disulfide bond. 4 N-linked (GlcNAc...) asparagine glycosylation sites follow: N522, N579, N608, and N625. Residues 523-617 (GSLNIKIRDI…NVTTKGLDPD (95 aa)) form the Fibronectin type-III domain. Residues 629-649 (LMACLGGLLGIIGVICLISCL) traverse the membrane as a helical segment. At 650–708 (SPEMNCDGGHSYVRNYLQKPTFALGELYPPLINLWEAGKEKSTSLKVKATVIGLPTNMS) the chain is on the cytoplasmic side.

Its subcellular location is the membrane. The protein is Leucine-rich repeat neuronal protein 3 (LRRN3) of Pongo abelii (Sumatran orangutan).